Here is a 166-residue protein sequence, read N- to C-terminus: NADH-ubiquinone oxidoreductase chain 6 (166 aa).

A run of 6 helical transmembrane segments spans residues 4–24 (FFSLVLVFLVLSVVVLGVVSA), 27–47 (QGVVALMGVSFFCCIFMVFLG), 50–70 (FAALVMYIVYLGGLVVVFGYC), 82–102 (VGGTKYFIVCVSLLLVVLLCL), 109–129 (LLVYVNWGDLVCLEMNGVGVF), and 135–155 (WGLIVCSWGLLVVLFSILVIL).

The protein belongs to the complex I subunit 6 family.

Its subcellular location is the mitochondrion membrane. The enzyme catalyses a ubiquinone + NADH + 5 H(+)(in) = a ubiquinol + NAD(+) + 4 H(+)(out). Functionally, core subunit of the mitochondrial membrane respiratory chain NADH dehydrogenase (Complex I) that is believed to belong to the minimal assembly required for catalysis. Complex I functions in the transfer of electrons from NADH to the respiratory chain. The immediate electron acceptor for the enzyme is believed to be ubiquinone. The chain is NADH-ubiquinone oxidoreductase chain 6 (MT-ND6) from Lycodon semicarinatus (Ryukyu odd-tooth snake).